Consider the following 7073-residue polypeptide: MESLVLGVNEKTHVQLSLPVLQVRDVLVRGFGDSVEEALSEAREHLKNGTCGLVELEKGVLPQLEQPYVFIKRSDALSTNHGHKVVELVAEMDGIQYGRSGITLGVLVPHVGETPIAYRNVLLRKNGNKGAGGHSYGIDLKSYDLGDELGTDPIEDYEQNWNTKHGSGALRELTRELNGGAVTRYVDNNFCGPDGYPLDCIKDFLARAGKSMCTLSEQLDYIESKRGVYCCRDHEHEIAWFTERSDKSYEHQTPFEIKSAKKFDTFKGECPKFVFPLNSKVKVIQPRVEKKKTEGFMGRIRSVYPVASPQECNNMHLSTLMKCNHCDEVSWQTCDFLKATCEHCGTENLVIEGPTTCGYLPTNAVVKMPCPACQDPEIGPEHSVADYHNHSNIETRLRKGGRTRCFGGCVFAYVGCYNKRAYWVPRASADIGSGHTGITGDNVETLNEDLLEILSRERVNINIVGDFHLNEEVAIILASFSASTSAFIDTIKSLDYKSFKTIVESCGNYKVTKGKPVKGAWNIGQQRSVLTPLCGFPSQAAGVIRSIFARTLDAANHSIPDLQRAAVTILDGISEQSLRLVDAMVYTSDLLTNSVIIMAYVTGGLVQQTSQWLSNLLGTTVEKLRPIFEWIEAKLSAGVEFLKDAWEILKFLITGVFDIVKGQIQVASDNIKDCVKCFIDVVNKALEMCIDQVTIAGAKLRSLNLGEVFIAQSKGLYRQCIRGKEQLQLLMPLKAPKEVTFLEGDSHDTVLTSEEVVLKNGELEALETPVDSFTNGAIVGTPVCVNGLMLLEIKDKEQYCALSPGLLATNNVFRLKGGAPIKGVTFGEDTVWEVQGYKNVRITFELDERVDKVLNEKCSVYTVESGTEVTEFACVVAEAVVKTLQPVSDLLTNMGIDLDEWSVATFYLFDDAGEENFSSRMYCSFYPPDEEEEDDAECEEEEIDETCEHEYGTEDDYQGLPLEFGASAETVRVEEEEEEDWLDDTTEQSEIEPEPEPTPEEPVNQFTGYLKLTDNVAIKCVDIVKEAQSANPMVIVNAANIHLKHGGGVAGALNKATNGAMQKESDDYIKLNGPLTVGGSCLLSGHNLAKKCLHVVGPNLNAGEDIQLLKAAYENFNSQDILLAPLLSAGIFGAKPLQSLQVCVQTVRTQVYIAVNDKALYEQVVMDYLDNLKPRVEAPKQEEPPNTEDSKTEEKSVVQKPVDVKPKIKACIDEVTTTLEETKFLTNKLLLFADINGKLYHDSQNMLRGEDMSFLEKDAPYMVGDVITSGDITCVVIPSKKAGGTTEMLSRALKKVPVDEYITTYPGQGCAGYTLEEAKTALKKCKSAFYVLPSEAPNAKEEILGTVSWNLREMLAHAEETRKLMPICMDVRAIMATIQRKYKGIKIQEGIVDYGVRFFFYTSKEPVASIITKLNSLNEPLVTMPIGYVTHGFNLEEAARCMRSLKAPAVVSVSSPDAVTTYNGYLTSSSKTSEEHFVETVSLAGSYRDWSYSGQRTELGVEFLKRGDKIVYHTLESPVEFHLDGEVLSLDKLKSLLSLREVKTIKVFTTVDNTNLHTQLVDMSMTYGQQFGPTYLDGADVTKIKPHVNHEGKTFFVLPSDDTLRSEAFEYYHTLDESFLGRYMSALNHTKKWKFPQVGGLTSIKWADNNCYLSSVLLALQQLEVKFNAPALQEAYYRARAGDAANFCALILAYSNKTVGELGDVRETMTHLLQHANLESAKRVLNVVCKHCGQKTTTLTGVEAVMYMGTLSYDNLKTGVSIPCVCGRDATQYLVQQESSFVMMSAPPAEYKLQQGTFLCANEYTGNYQCGHYTHITAKETLYRIDGAHLTKMSEYKGPVTDVFYKETSYTTTIKPVSYKLDGVTYTEIEPKLDGYYKKDNAYYTEQPIDLVPTQPLPNASFDNFKLTCSNTKFADDLNQMTGFTKPASRELSVTFFPDLNGDVVAIDYRHYSASFKKGAKLLHKPIVWHINQATTKTTFKPNTWCLRCLWSTKPVDTSNSFEVLAVEDTQGMDNLACESQQPTSEEVVENPTIQKEVIECDVKTTEVVGNVILKPSDEGVKVTQELGHEDLMAAYVENTSITIKKPNELSLALGLKTIATHGIAAINSVPWSKILAYVKPFLGQAAITTSNCAKRLAQRVFNNYMPYVFTLLFQLCTFTKSTNSRIRASLPTTIAKNSVKSVAKLCLDAGINYVKSPKFSKLFTIAMWLLLLSICLGSLICVTAAFGVLLSNFGAPSYCNGVRELYLNSSNVTTMDFCEGSFPCSICLSGLDSLDSYPALETIQVTISSYKLDLTILGLAAEWVLAYMLFTKFFYLLGLSAIMQVFFGYFASHFISNSWLMWFIISIVQMAPVSAMVRMYIFFASFYYIWKSYVHIMDGCTSSTCMMCYKRNRATRVECTTIVNGMKRSFYVYANGGRGFCKTHNWNCLNCDTFCTGSTFISDEVARDLSLQFKRPINPTDQSSYIVDSVAVKNGALHLYFDKAGQKTYERHPLSHFVNLDNLRANNTKGSLPINVIVFDGKSKCDESASKSASVYYSQLMCQPILLLDQALVSDVGDSTEVSVKMFDAYVDTFSATFSVPMEKLKALVATAHSELAKGVALDGVLSTFVSAARQGVVDTDVDTKDVIECLKLSHHSDLEVTGDSCNNFMLTYNKVENMTPRDLGACIDCNARHINAQVAKSHNVSLIWNVKDYMSLSEQLRKQIRSAAKKNNIPFRLTCATTRQVVNVITTKISLKGGKIVSTCFKLMLKATLLCVLAALVCYIVMPVHTLSIHDGYTNEIIGYKAIQDGVTRDIISTDDCFANKHAGFDAWFSQRGGSYKNDKSCPVVAAIITREIGFIVPGLPGTVLRAINGDFLHFLPRVFSAVGNICYTPSKLIEYSDFATSACVLAAECTIFKDAMGKPVPYCYDTNLLEGSISYSELRPDTRYVLMDGSIIQFPNTYLEGSVRVVTTFDAEYCRHGTCERSEVGICLSTSGRWVLNNEHYRALSGVFCGVDAMNLIANIFTPLVQPVGALDVSASVVAGGIIAILVTCAAYYFMKFRRVFGEYNHVVAANALLFLMSFTILCLVPAYSFLPGVYSVFYLYLTFYFTNDVSFLAHLQWFAMFSPIVPFWITAIYVFCISLKHCHWFFNNYLRKRVMFNGVTFSTFEEAALCTFLLNKEMYLKLRSETLLPLTQYNRYLALYNKYKYFSGALDTTSYREAACCHLAKALNDFSNSGADVLYQPPQTSITSAVLQSGFRKMAFPSGKVEGCMVQVTCGTTTLNGLWLDDTVYCPRHVICTAEDMLNPNYEDLLIRKSNHSFLVQAGNVQLRVIGHSMQNCLLRLKVDTSNPKTPKYKFVRIQPGQTFSVLACYNGSPSGVYQCAMRPNHTIKGSFLNGSCGSVGFNIDYDCVSFCYMHHMELPTGVHAGTDLEGKFYGPFVDRQTAQAAGTDTTITLNVLAWLYAAVINGDRWFLNRFTTTLNDFNLVAMKYNYEPLTQDHVDILGPLSAQTGIAVLDMCAALKELLQNGMNGRTILGSTILEDEFTPFDVVRQCSGVTFQGKFKKIVKGTHHWMLLTFLTSLLILVQSTQWSLFFFVYENAFLPFTLGIMAIAACAMLLVKHKHAFLCLFLLPSLATVAYFNMVYMPASWVMRIMTWLELADTSLSGYRLKDCVMYASALVLLILMTARTVYDDAARRVWTLMNVITLVYKVYYGNALDQAISMWALVISVTSNYSGVVTTIMFLARAIVFVCVEYYPLLFITGNTLQCIMLVYCFLGYCCCCYFGLFCLLNRYFRLTLGVYDYLVSTQEFRYMNSQGLLPPKSSIDAFKLNIKLLGIGGKPCIKVATVQSKMSDVKCTSVVLLSVLQQLRVESSSKLWAQCVQLHNDILLAKDTTEAFEKMVSLLSVLLSMQGAVDINRLCEEMLDNRATLQAIASEFSSLPSYAAYATAQEAYEQAVANGDSEVVLKKLKKSLNVAKSEFDRDAAMQRKLEKMADQAMTQMYKQARSEDKRAKVTSAMQTMLFTMLRKLDNDALNNIINNARDGCVPLNIIPLTTAAKLMVVVPDYGTYKNTCDGNTFTYASALWEIQQVVDADSKIVQLSEINMDNSPNLAWPLIVTALRANSAVKLQNNELSPVALRQMSCAAGTTQTACTDDNALAYYNNSKGGRFVLALLSDHQDLKWARFPKSDGTGTIYTELEPPCRFVTDTPKGPKVKYLYFIKGLNNLNRGMVLGSLAATVRLQAGNATEVPANSTVLSFCAFAVDPAKAYKDYLASGGQPITNCVKMLCTHTGTGQAITVTPEANMDQESFGGASCCLYCRCHIDHPNPKGFCDLKGKYVQIPTTCANDPVGFTLRNTVCTVCGMWKGYGCSCDQLREPLMQSADASTFLNRVCGVSAARLTPCGTGTSTDVVYRAFDIYNEKVAGFAKFLKTNCCRFQEKDEEGNLLDSYFVVKRHTMSNYQHEETIYNLVKDCPAVAVHDFFKFRVDGDMVPHISRQRLTKYTMADLVYALRHFDEGNCDTLKEILVTYNCCDDDYFNKKDWYDFVENPDILRVYANLGERVRQSLLKTVQFCDAMRDAGIVGVLTLDNQDLNGNWYDFGDFVQVAPGCGVPIVDSYYSLLMPILTLTRALAAESHMDADLAKPLIKWDLLKYDFTEERLCLFDRYFKYWDQTYHPNCINCLDDRCILHCANFNVLFSTVFPPTSFGPLVRKIFVDGVPFVVSTGYHFRELGVVHNQDVNLHSSRLSFKELLVYAADPAMHAASGNLLLDKRTTCFSVAALTNNVAFQTVKPGNFNKDFYDFAVSKGFFKEGSSVELKHFFFAQDGNAAISDYDYYRYNLPTMCDIRQLLFVVEVVDKYFDCYDGGCINANQVIVNNLDKSAGFPFNKWGKARLYYDSMSYEDQDALFAYTKRNVIPTITQMNLKYAISAKNRARTVAGVSICSTMTNRQFHQKLLKSIAATRGATVVIGTSKFYGGWHNMLKTVYSDVETPHLMGWDYPKCDRAMPNMLRIMASLVLARKHNTCCNLSHRFYRLANECAQVLSEMVMCGGSLYVKPGGTSSGDATTAYANSVFNICQAVTANVNALLSTDGNKIADKYVRNLQHRLYECLYRNRDVDHEFVDEFYAYLRKHFSMMILSDDAVVCYNSNYAAQGLVASIKNFKAVLYYQNNVFMSEAKCWTETDLTKGPHEFCSQHTMLVKQGDDYVYLPYPDPSRILGAGCFVDDIVKTDGTLMIERFVSLAIDAYPLTKHPNQEYADVFHLYLQYIRKLHDELTGHMLDMYSVMLTNDNTSRYWEPEFYEAMYTPHTVLQAVGACVLCNSQTSLRCGACIRRPFLCCKCCYDHVISTSHKLVLSVNPYVCNAPGCDVTDVTQLYLGGMSYYCKSHKPPISFPLCANGQVFGLYKNTCVGSDNVTDFNAIATCDWTNAGDYILANTCTERLKLFAAETLKATEETFKLSYGIATVREVLSDRELHLSWEVGKPRPPLNRNYVFTGYRVTKNSKVQIGEYTFEKGDYGDAVVYRGTTTYKLNVGDYFVLTSHTVMPLSAPTLVPQEHYVRITGLYPTLNISDEFSSNVANYQKVGMQKYSTLQGPPGTGKSHFAIGLALYYPSARIVYTACSHAAVDALCEKALKYLPIDKCSRIIPARARVECFDKFKVNSTLEQYVFCTVNALPETTADIVVFDEISMATNYDLSVVNARLRAKHYVYIGDPAQLPAPRTLLTKGTLEPEYFNSVCRLMKTIGPDMFLGTCRRCPAEIVDTVSALVYDNKLKAHKDKSAQCFKMFYKGVITHDVSSAINRPQIGVVREFLTRNPAWRKAVFISPYNSQNAVASKILGLPTQTVDSSQGSEYDYVIFTQTTETAHSCNVNRFNVAITRAKIGILCIMSDRDLYDKLQFTSLEIPRRNVATLQAENVTGLFKDCSKIITGLHPTQAPTHLSVDIKFKTEGLCVDIPGIPKDMTYRRLISMMGFKMNYQVNGYPNMFITREEAIRHVRAWIGFDVEGCHATRDAVGTNLPLQLGFSTGVNLVAVPTGYVDTENNTEFTRVNAKPPPGDQFKHLIPLMYKGLPWNVVRIKIVQMLSDTLKGLSDRVVFVLWAHGFELTSMKYFVKIGPERTCCLCDKRATCFSTSSDTYACWNHSVGFDYVYNPFMIDVQQWGFTGNLQSNHDQHCQVHGNAHVASCDAIMTRCLAVHECFVKRVDWSVEYPIIGDELRVNSACRKVQHMVVKSALLADKFPVLHDIGNPKAIKCVPQAEVEWKFYDAQPCSDKAYKIEELFYSYATHHDKFTDGVCLFWNCNVDRYPANAIVCRFDTRVLSNLNLPGCDGGSLYVNKHAFHTPAFDKSAFTNLKQLPFFYYSDSPCESHGKQVVSDIDYVPLKSATCITRCNLGGAVCRHHANEYRQYLDAYNMMISAGFSLWIYKQFDTYNLWNTFTRLQSLENVAYNVVNKGHFDGHAGEAPVSIINNAVYTKVDGIDVEIFENKTTLPVNVAFELWAKRNIKPVPEIKILNNLGVDIAANTVIWDYKREAPAHVSTIGVCTMTDIAKKPTESACSSLTVLFDGRVEGQVDLFRNARNGVLITEGSVKGLTPSKGPAQASVNGVTLIGESVKTQFNYFKKVDGIIQQLPETYFTQSRDLEDFKPRSQMETDFLELAMDEFIQRYKLEGYAFEHIVYGDFSHGQLGGLHLMIGLAKRSQDSPLKLEDFIPMDSTVKNYFITDAQTGSSKCVCSVIDLLLDDFVEIIKSQDLSVISKVVKVTIDYAEISFMLWCKDGHVETFYPKLQASQAWQPGVAMPNLYKMQRMLLEKCDLQNYGENAVIPKGIMMNVAKYTQLCQYLNTLTLAVPYNMRVIHFGAGSDKGVAPGTAVLRQWLPTGTLLVDSDLNDFVSDADSTLIGDCATVHTANKWDLIISDMYDPRTKHVTKENDSKEGFFTYLCGFIKQKLALGGSIAVKITEHSWNADLYKLMGHFSWWTAFVTNVNASSSEAFLIGANYLGKPKEQIDGYTMHANYIFWRNTNPIQLSSYSLFDMSKFPLKLRGTAVMSLKENQINDMIYSLLEKGRLIIRENNRVVVSSDILVNN.

The Cytoplasmic segment spans residues 1–2202; sequence MESLVLGVNE…NYVKSPKFSK (2202 aa). The CoV Nsp1 globular domain maps to 12 to 127; sequence THVQLSLPVL…YRNVLLRKNG (116 aa). The 32-residue stretch at 148-179 folds into the BetaCoV Nsp1 C-terminal domain; it reads ELGTDPIEDYEQNWNTKHGSGALRELTRELNG. The CoV Nsp2 N-terminal domain occupies 183 to 456; that stretch reads TRYVDNNFCG…NEDLLEILSR (274 aa). Zn(2+) contacts are provided by cysteine 200, cysteine 231, histidine 234, histidine 236, cysteine 323, cysteine 326, cysteine 341, cysteine 344, cysteine 370, cysteine 373, histidine 382, and cysteine 416. Residues 200–236 form a C2H2 region; it reads CIKDFLARAGKSMCTLSEQLDYIESKRGVYCCRDHEH. The segment at 323–344 is C4; it reads CNHCDEVSWQTCDFLKATCEHC. The C2HC stretch occupies residues 370–416; it reads CPACQDPEIGPEHSVADYHNHSNIETRLRKGGRTRCFGGCVFAYVGC. A CoV Nsp2 middle domain is found at 458–688; it reads RVNINIVGDF…IDVVNKALEM (231 aa). The 129-residue stretch at 690 to 818 folds into the CoV Nsp2 C-terminal domain; it reads IDQVTIAGAK…TNNVFRLKGG (129 aa). The Ubiquitin-like 1 domain maps to 822-930; that stretch reads KGVTFGEDTV…MYCSFYPPDE (109 aa). Disordered regions lie at residues 972–1003 and 1175–1198; these read RVEE…EEPV and RVEA…KSVV. Over residues 974–999 the composition is skewed to acidic residues; it reads EEEEEEDWLDDTTEQSEIEPEPEPTP. In terms of domain architecture, Macro 1 spans 1003 to 1169; the sequence is VNQFTGYLKL…LYEQVVMDYL (167 aa). Macro domains lie at 1207-1335 and 1343-1470; these read KIKA…LPSE and ILGT…TSSS. The 67-residue stretch at 1472–1538 folds into the DPUP domain; the sequence is TSEEHFVETV…SLDKLKSLLS (67 aa). Positions 1542-1597 constitute a Ubiquitin-like 2 domain; that stretch reads VKTIKVFTTVDNTNLHTQLVDMSMTYGQQFGPTYLDGADVTKIKPHVNHEGKTFFV. The Peptidase C16 domain occupies 1611–1875; the sequence is YYHTLDESFL…YTEIEPKLDG (265 aa). The active-site For PL-PRO activity is cysteine 1651. Zn(2+) is bound by residues cysteine 1729, cysteine 1732, cysteine 1764, and cysteine 1766. A C4-type zinc finger spans residues 1729–1766; that stretch reads CKHCGQKTTTLTGVEAVMYMGTLSYDNLKTGVSIPCVC. Residues histidine 1812 and aspartate 1826 each act as for PL-PRO activity in the active site. The Nucleic acid-binding domain maps to 1888-1998; the sequence is PIDLVPTQPL…CLWSTKPVDT (111 aa). In terms of domain architecture, G2M spans 2023-2132; it reads PTSEEVVENP…LGQAAITTSN (110 aa). Residues 2203–2223 traverse the membrane as a helical segment; the sequence is LFTIAMWLLLLSICLGSLICV. The segment at 2203–2324 is HD1; that stretch reads LFTIAMWLLL…FYLLGLSAIM (122 aa). The 3Ecto domain occupies 2224–2294; sequence TAAFGVLLSN…QVTISSYKLD (71 aa). Residues 2224–2303 are Lumenal-facing; that stretch reads TAAFGVLLSN…DLTILGLAAE (80 aa). Intrachain disulfides connect cysteine 2240–cysteine 2268 and cysteine 2259–cysteine 2265. Residues 2304–2324 form a helical membrane-spanning segment; the sequence is WVLAYMLFTKFFYLLGLSAIM. At 2325–2754 the chain is on the cytoplasmic side; it reads QVFFGYFASH…TCFKLMLKAT (430 aa). The segment at 2372 to 2462 is Y1; that stretch reads KSYVHIMDGC…QFKRPINPTD (91 aa). A CoV Nsp3 Y domain is found at 2372–2740; it reads KSYVHIMDGC…ITTKISLKGG (369 aa). Residues histidine 2376, cysteine 2381, cysteine 2386, cysteine 2389, cysteine 2422, histidine 2425, cysteine 2429, and cysteine 2432 each contribute to the Zn(2+) site. Positions 2376 to 2389 are ZF1; the sequence is HIMDGCTSSTCMMC. Residues 2422–2432 form a ZF2 region; that stretch reads CKTHNWNCLNC. Residues 2463 to 2557 form a Y2 region; the sequence is QSSYIVDSVA…LLDQALVSDV (95 aa). Residues 2463-2740 are coV-Y; it reads QSSYIVDSVA…ITTKISLKGG (278 aa). A Y3 region spans residues 2558–2639; sequence GDSTEVSVKM…ECLKLSHHSD (82 aa). A Y4 region spans residues 2640–2740; that stretch reads LEVTGDSCNN…ITTKISLKGG (101 aa). Residues 2755-2775 form a helical membrane-spanning segment; sequence LLCVLAALVCYIVMPVHTLSI. An HD2 region spans residues 2755–3125; the sequence is LLCVLAALVC…WITAIYVFCI (371 aa). The Lumenal segment spans residues 2776–3021; sequence HDGYTNEIIG…VQPVGALDVS (246 aa). A helical transmembrane segment spans residues 3022 to 3042; that stretch reads ASVVAGGIIAILVTCAAYYFM. Residues 3043–3076 are Cytoplasmic-facing; the sequence is KFRRVFGEYNHVVAANALLFLMSFTILCLVPAYS. Residues 3077 to 3097 traverse the membrane as a helical segment; the sequence is FLPGVYSVFYLYLTFYFTNDV. At 3098–3104 the chain is on the lumenal side; sequence SFLAHLQ. A helical membrane pass occupies residues 3105–3125; the sequence is WFAMFSPIVPFWITAIYVFCI. Topologically, residues 3126-3563 are cytoplasmic; that stretch reads SLKHCHWFFN…KGTHHWMLLT (438 aa). The Nsp4C domain maps to 3142-3240; that stretch reads VMFNGVTFST…QTSITSAVLQ (99 aa). One can recognise a Peptidase C30 domain in the interval 3241–3546; sequence SGFRKMAFPS…VRQCSGVTFQ (306 aa). Active-site for 3CL-PRO activity residues include histidine 3281 and cysteine 3385. A helical membrane pass occupies residues 3564–3584; the sequence is FLTSLLILVQSTQWSLFFFVY. The interval 3564–3776 is HD3; that stretch reads FLTSLLILVQ…CCCYFGLFCL (213 aa). A topological domain (lumenal) is located at residue glutamate 3585. The chain crosses the membrane as a helical span at residues 3586–3606; sequence NAFLPFTLGIMAIAACAMLLV. At 3607–3611 the chain is on the cytoplasmic side; it reads KHKHA. Residues 3612–3632 form a helical membrane-spanning segment; the sequence is FLCLFLLPSLATVAYFNMVYM. Residues 3633–3657 lie on the Lumenal side of the membrane; that stretch reads PASWVMRIMTWLELADTSLSGYRLK. The helical transmembrane segment at 3658-3678 threads the bilayer; that stretch reads DCVMYASALVLLILMTARTVY. Residues 3679–3727 are Cytoplasmic-facing; it reads DDAARRVWTLMNVITLVYKVYYGNALDQAISMWALVISVTSNYSGVVTT. A helical membrane pass occupies residues 3728 to 3748; sequence IMFLARAIVFVCVEYYPLLFI. The Lumenal portion of the chain corresponds to 3749–3755; the sequence is TGNTLQC. The helical transmembrane segment at 3756–3776 threads the bilayer; that stretch reads IMLVYCFLGYCCCCYFGLFCL. Over 3777–7073 the chain is Cytoplasmic; it reads LNRYFRLTLG…VVSSDILVNN (3297 aa). One can recognise a RdRp Nsp7 cofactor domain in the interval 3837–3919; the sequence is SKMSDVKCTS…EMLDNRATLQ (83 aa). The region spanning 3920 to 4117 is the RdRp Nsp8 cofactor domain; the sequence is AIASEFSSLP…LRANSAVKLQ (198 aa). A Nsp9 ssRNA-binding domain is found at 4118-4230; it reads NNELSPVALR…GSLAATVRLQ (113 aa). The ExoN/MTase coactivator domain maps to 4231-4369; it reads AGNATEVPAN…CDQLREPLMQ (139 aa). Residues cysteine 4304, cysteine 4307, histidine 4313, cysteine 4320, cysteine 4347, cysteine 4350, cysteine 4358, and cysteine 4360 each contribute to the Zn(2+) site. Zinc fingers lie at residues 4304-4320 and 4347-4360; these read CLYC…KGFC and CTVC…GCSC. One can recognise a NiRAN domain in the interval 4376-4630; sequence FLNRVCGVSA…AAESHMDADL (255 aa). Mn(2+)-binding residues include asparagine 4578 and aspartate 4587. Positions 4635–4733 constitute a Nsp12 Interface domain; it reads IKWDLLKYDF…HNQDVNLHSS (99 aa). 5 residues coordinate Zn(2+): histidine 4664, cysteine 4670, cysteine 4675, cysteine 4679, and cysteine 4856. The region spanning 4734-5301 is the Nsp12 RNA-dependent RNA polymerase domain; the sequence is RLSFKELLVY…AMYTPHTVLQ (568 aa). Residues 4736 to 4950 are rdRp Fingers N-ter; it reads SFKELLVYAA…HQKLLKSIAA (215 aa). Residues 4951-4989 form a rdRp Palm N-ter region; the sequence is TRGATVVIGTSKFYGGWHNMLKTVYSDVETPHLMGWDYP. One can recognise a RdRp catalytic domain in the interval 4981–5143; the sequence is PHLMGWDYPK…CYNSNYAAQG (163 aa). The tract at residues 4990–5048 is rdRp Fingers C-ter; sequence KCDRAMPNMLRIMASLVLARKHNTCCNLSHRFYRLANECAQVLSEMVMCGGSLYVKPGG. Residues histidine 5011, cysteine 5014, and cysteine 5015 each coordinate Zn(2+). Residues 5049–5184 are rdRp Palm C-ter; sequence TSSGDATTAY…TKGPHEFCSQ (136 aa). Active-site residues include serine 5128, aspartate 5129, and aspartate 5130. The tract at residues 5185–5301 is rdRp Thumb; it reads HTMLVKQGDD…AMYTPHTVLQ (117 aa). Residues 5302–5414 form the CV ZBD domain; the sequence is AVGACVLCNS…TDFNAIATCD (113 aa). 12 residues coordinate Zn(2+): cysteine 5306, cysteine 5309, cysteine 5317, cysteine 5320, cysteine 5327, cysteine 5330, histidine 5334, histidine 5340, cysteine 5351, cysteine 5356, cysteine 5373, and histidine 5376. Residues 5558–5739 form the (+)RNA virus helicase ATP-binding domain; that stretch reads NISDEFSSNV…MKTIGPDMFL (182 aa). 5583 to 5590 is a binding site for ATP; sequence GPPGTGKS. The (+)RNA virus helicase C-terminal domain maps to 5740-5909; that stretch reads GTCRRCPAEI…TLQAENVTGL (170 aa). In terms of domain architecture, ExoN spans 5974-6189; the sequence is MFITREEAIR…RCLAVHECFV (216 aa). Residues aspartate 5992, glutamate 5994, and glutamate 6093 contribute to the active site. The Mg(2+) site is built by glutamate 5994 and glutamate 6093. Positions 6109, 6112, 6128, 6131, 6159, 6163, and 6166 each coordinate Zn(2+). Residues histidine 6170 and aspartate 6175 contribute to the active site. Mg(2+)-binding residues include histidine 6170 and aspartate 6175. Position 6181 (cysteine 6181) interacts with Zn(2+). The region spanning 6198 to 6429 is the N7-MTase domain; that stretch reads YPIIGDELRV…NLWNTFTRLQ (232 aa). 6233–6239 lines the S-adenosyl-L-methionine pocket; the sequence is DIGNPKA. The tract at residues 6316–6330 is gpppA-binding; the sequence is CDGGSLYVNKHAFHT. Zn(2+) is bound by residues cysteine 6354, cysteine 6375, cysteine 6386, and histidine 6389. Positions 6430–6490 constitute a Nsp15 N-terminal oligomerization domain; sequence SLENVAYNVV…NVAFELWAKR (61 aa). The region spanning 6491–6616 is the AV-Nsp11N/CoV-Nsp15M domain; the sequence is NIKPVPEIKI…YFKKVDGIIQ (126 aa). In terms of domain architecture, NendoU spans 6633–6772; the sequence is KPRSQMETDF…KDGHVETFYP (140 aa). Catalysis depends on residues histidine 6663, histidine 6678, lysine 6718, lysine 6821, aspartate 6905, lysine 6945, and glutamate 6978. A Nidovirus-type SAM-dependent 2'-O-MTase domain is found at 6777–7071; it reads SQAWQPGVAM…RVVVSSDILV (295 aa).

Belongs to the coronaviruses polyprotein 1ab family. Interacts with host PHB and PHB2. As to quaternary structure, interacts with papain-like protease nsp3 and non-structural protein 6. In terms of assembly, monomer. Homodimer. Only the homodimer shows catalytic activity. Interacts with nsp8 and nsp12 to form the replication-transcription complex (RTC): nsp12, nsp7, two subunits of nsp8, and up to two subunits of nsp13. Eight copies of nsp7 and eight copies of nsp8 assemble to form a heterohexadecamer dsRNA-encircling ring structure. As to quaternary structure, interacts with nsp7, nsp13 and nsp12 to form the replication-transcription complex (RTC): nsp12, nsp7, two subunits of nsp8, and up to two subunits of nsp13. Eight copies of nsp7 and eight copies of nsp8 assemble to form a heterohexadecamer dsRNA-encircling ring structure. Interacts with ORF6 protein. In terms of assembly, homodimer. Interacts with nsp12. Homododecamer. Interacts with proofreading exoribonuclease nsp14 and 2'-O-methyltransferase nsp16; these interactions enhance nsp14 and nsp16 enzymatic activities. As to quaternary structure, interacts with nsp7 and nsp8 to form the replication-transcription complex (RTC): nsp12, nsp7, two subunits of nsp8, and up to two subunits of nsp13. Interacts with nsp9. In terms of assembly, interacts with nsp8 to form the replication-transcription complex (RTC): nsp12, nsp7, two subunits of nsp8, and up to two subunits of nsp13. Interacts (via N-terminus) with host DDX1. Interacts with non-structural protein 10. As to quaternary structure, homohexamer. In terms of assembly, interacts with nsp10. Zn(2+) is required as a cofactor. Requires Mn(2+) as cofactor. It depends on Mg(2+) as a cofactor. In terms of processing, specific enzymatic cleavages in vivo by its own proteases yield mature proteins. 3C-like proteinase nsp5 liberates nsps 6-16 from the polyprotein. Papain-like and 3C-like proteinases are autocatalytically processed.

The protein localises to the host cytoplasm. It is found in the host endosome. It localises to the host membrane. The protein resides in the host Golgi apparatus. Its subcellular location is the host perinuclear region. The protein localises to the host endoplasmic reticulum. It is found in the host endoplasmic reticulum-Golgi intermediate compartment. It carries out the reaction RNA(n) + a ribonucleoside 5'-triphosphate = RNA(n+1) + diphosphate. The catalysed reaction is ATP + H2O = ADP + phosphate + H(+). The enzyme catalyses TSAVLQ-|-SGFRK-NH2 and SGVTFQ-|-GKFKK the two peptides corresponding to the two self-cleavage sites of the SARS 3C-like proteinase are the two most reactive peptide substrates. The enzyme exhibits a strong preference for substrates containing Gln at P1 position and Leu at P2 position.. It catalyses the reaction Thiol-dependent hydrolysis of ester, thioester, amide, peptide and isopeptide bonds formed by the C-terminal Gly of ubiquitin (a 76-residue protein attached to proteins as an intracellular targeting signal).. It carries out the reaction a 5'-end (N(7)-methyl 5'-triphosphoguanosine)-ribonucleoside in mRNA + S-adenosyl-L-methionine = a 5'-end (N(7)-methyl 5'-triphosphoguanosine)-(2'-O-methyl-ribonucleoside) in mRNA + S-adenosyl-L-homocysteine + H(+). The catalysed reaction is uridylyl-uridylyl-ribonucleotide-RNA = a 3'-end uridylyl-2',3'-cyclophospho-uridine-RNA + a 5'-end dephospho-ribonucleoside-RNA. The enzyme catalyses a 5'-end (5'-triphosphoguanosine)-ribonucleoside in mRNA + S-adenosyl-L-methionine = a 5'-end (N(7)-methyl 5'-triphosphoguanosine)-ribonucleoside in mRNA + S-adenosyl-L-homocysteine. It catalyses the reaction a 5'-end diphospho-ribonucleoside in mRNA + GTP + H(+) = a 5'-end (5'-triphosphoguanosine)-ribonucleoside in mRNA + diphosphate. Its activity is regulated as follows. Inhibited by Remdesivir (GS-5734). Its function is as follows. Multifunctional protein involved in the transcription and replication of viral RNAs. Contains the proteinases responsible for the cleavages of the polyprotein. Functionally, inhibits host translation by interacting with the 40S ribosomal subunit. The nsp1-40S ribosome complex further induces an endonucleolytic cleavage near the 5'UTR of host mRNAs, targeting them for degradation. Viral mRNAs are not susceptible to nsp1-mediated endonucleolytic RNA cleavage thanks to the presence of a 5'-end leader sequence and are therefore protected from degradation. By suppressing host gene expression, nsp1 facilitates efficient viral gene expression in infected cells and evasion from host immune response. May disrupt nuclear pore function by binding and displacing host NUP93. In terms of biological role, may play a role in the modulation of host cell survival signaling pathway by interacting with host PHB and PHB2. Indeed, these two proteins play a role in maintaining the functional integrity of the mitochondria and protecting cells from various stresses. Responsible for the cleavages located at the N-terminus of the replicase polyprotein. In addition, PL-PRO possesses a deubiquitinating/deISGylating activity and processes both 'Lys-48'- and 'Lys-63'-linked polyubiquitin chains from cellular substrates. Plays a role in host membrane rearrangement that leads to creation of cytoplasmic double-membrane vesicles (DMV) necessary for viral replication. Nsp3, nsp4 and nsp6 together are sufficient to form DMV. Antagonizes innate immune induction of type I interferon by blocking the phosphorylation, dimerization and subsequent nuclear translocation of host IRF3. Also prevents host NF-kappa-B signaling. Its function is as follows. Plays a role in host membrane rearrangement that leads to creation of cytoplasmic double-membrane vesicles (DMV) necessary for viral replication. Alone appears incapable to induce membrane curvature, but together with nsp3 is able to induce paired membranes. Nsp3, nsp4 and nsp6 together are sufficient to form DMV. Functionally, cleaves the C-terminus of replicase polyprotein at 11 sites. Recognizes substrates containing the core sequence [ILMVF]-Q-|-[SGACN]. May cleave human NLRP1 in lung epithelial cells, thereby activating the NLRP1 inflammasome pathway. Also able to bind an ADP-ribose-1''-phosphate (ADRP). May cleave host ATP6V1G1 thereby modifying host vacuoles intracellular pH. In terms of biological role, plays a role in host membrane rearrangement that leads to creation of cytoplasmic double-membrane vesicles (DMV) necessary for viral replication. Nsp3, nsp4 and nsp6 together are sufficient to form DMV. Plays a role in the initial induction of autophagosomes from host endoplasmic reticulum. Later, limits the expansion of these phagosomes that are no longer able to deliver viral components to lysosomes. Forms a hexadecamer with nsp8 (8 subunits of each) that may participate in viral replication by acting as a primase. Alternatively, may synthesize substantially longer products than oligonucleotide primers. Its function is as follows. Forms a hexadecamer with nsp7 (8 subunits of each) that may participate in viral replication by acting as a primase. Alternatively, may synthesize substantially longer products than oligonucleotide primers. Functionally, forms a primer, NSP9-pU, which is utilized by the polymerase for the initiation of RNA chains. Interacts with ribosome signal recognition particle RNA (SRP). Together with NSP8, suppress protein integration into the cell membrane, thereby disrupting host immune defenses. In terms of biological role, plays a pivotal role in viral transcription by stimulating both nsp14 3'-5' exoribonuclease and nsp16 2'-O-methyltransferase activities. Therefore plays an essential role in viral mRNAs cap methylation. RNA-directed RNA polymerase that catalyzes the transcription of viral genomic and subgenomic RNAs. Acts in complex with nsp7 and nsp8 to transcribe both the minus and positive strands of genomic RNA. The kinase-like NiRAN domain of NSP12 attaches one or more nucleotides to the amino terminus of NSP9, forming a covalent RNA-protein intermediate that serves as transcription/replication primer. Subgenomic RNAs (sgRNAs) are formed by discontinuous transcription: The polymerase has the ability to pause at transcription-regulating sequences (TRS) and jump to the leader TRS, resulting in a major deletion. This creates a series of subgenomic RNAs that are replicated, transcribed and translated. In addition, Nsp12 is a subunit of the viral RNA capping enzyme that catalyzes the RNA guanylyltransferase reaction for genomic and sub-genomic RNAs. Subsequently, the NiRAN domain transfers RNA to GDP, and forms the core cap structure GpppA-RNA. Its function is as follows. Multi-functional protein with a zinc-binding domain in N-terminus displaying RNA and DNA duplex-unwinding activities with 5' to 3' polarity. Activity of helicase is dependent on magnesium. Functionally, plays a role in viral RNA synthesis through two distinct activities. The N7-guanine methyltransferase activity plays a role in the formation of the cap structure GpppA-RNA. The proofreading exoribonuclease reduces the sensitivity of the virus to RNA mutagens during replication. This activity acts on both ssRNA and dsRNA in a 3'-5' direction. In terms of biological role, plays a role in viral transcription/replication and prevents the simultaneous activation of host cell dsRNA sensors, such as MDA5/IFIH1, OAS, and PKR. Acts by degrading the 5'-polyuridines generated during replication of the poly(A) region of viral genomic and subgenomic RNAs. Catalyzes a two-step reaction in which a 2'3'-cyclic phosphate (2'3'-cP) is first generated by 2'-O transesterification, which is then hydrolyzed to a 3'-phosphate (3'-P). If not degraded, poly(U) RNA would hybridize with poly(A) RNA tails and activate host dsRNA sensors. Methyltransferase that mediates mRNA cap 2'-O-ribose methylation to the 5'-cap structure of viral mRNAs. N7-methyl guanosine cap is a prerequisite for binding of nsp16. Therefore plays an essential role in viral mRNAs cap methylation which is essential to evade immune system. The polypeptide is Replicase polyprotein 1ab (rep) (Severe acute respiratory syndrome coronavirus (SARS-CoV)).